Consider the following 366-residue polypeptide: Alanine racemase (366 aa).

Lys40 acts as the Proton acceptor; specific for D-alanine in catalysis. N6-(pyridoxal phosphate)lysine is present on Lys40. Position 136 (Arg136) interacts with substrate. Residue Tyr263 is the Proton acceptor; specific for L-alanine of the active site. A substrate-binding site is contributed by Met310.

Belongs to the alanine racemase family. The cofactor is pyridoxal 5'-phosphate.

The catalysed reaction is L-alanine = D-alanine. It functions in the pathway amino-acid biosynthesis; D-alanine biosynthesis; D-alanine from L-alanine: step 1/1. Catalyzes the interconversion of L-alanine and D-alanine. May also act on other amino acids. The chain is Alanine racemase (alr) from Streptococcus pyogenes serotype M28 (strain MGAS6180).